The chain runs to 121 residues: Large ribosomal subunit protein uL14 (121 aa).

This sequence belongs to the universal ribosomal protein uL14 family. In terms of assembly, part of the 50S ribosomal subunit. Forms a cluster with proteins L3 and L19. In the 70S ribosome, L14 and L19 interact and together make contacts with the 16S rRNA in bridges B5 and B8.

Functionally, binds to 23S rRNA. Forms part of two intersubunit bridges in the 70S ribosome. In Bacteroides fragilis (strain ATCC 25285 / DSM 2151 / CCUG 4856 / JCM 11019 / LMG 10263 / NCTC 9343 / Onslow / VPI 2553 / EN-2), this protein is Large ribosomal subunit protein uL14.